Consider the following 121-residue polypeptide: MKKKYRIKKNEEFQEVFRRGVSTANRQFVVYTLDRPEQPYFRIGLSVSKKLGKAVVRNQIKRYVRQCFLELKEEVVPGKDYVIIARQPVAEMGYAEVKKSLLHVLRKAGGLKKRGRTTDLA.

The protein belongs to the RnpA family. In terms of assembly, consists of a catalytic RNA component (M1 or rnpB) and a protein subunit.

The catalysed reaction is Endonucleolytic cleavage of RNA, removing 5'-extranucleotides from tRNA precursor.. RNaseP catalyzes the removal of the 5'-leader sequence from pre-tRNA to produce the mature 5'-terminus. It can also cleave other RNA substrates such as 4.5S RNA. The protein component plays an auxiliary but essential role in vivo by binding to the 5'-leader sequence and broadening the substrate specificity of the ribozyme. The protein is Ribonuclease P protein component of Geobacillus thermodenitrificans (strain NG80-2).